A 245-amino-acid polypeptide reads, in one-letter code: Inner membrane protein YgaZ (245 aa).

Over 1-24 (MESPTPQPAPGSATFMEGCKDSLP) the chain is Cytoplasmic. A helical transmembrane segment spans residues 25-45 (IVISYIPVAFAFGLNATRLGF). Residues 46–63 (SPLESVFFSCIIYAGASQ) are Periplasmic-facing. A helical membrane pass occupies residues 64 to 84 (FVITAMLAAGSSLWIAALTVM). Topologically, residues 85–109 (AMDVRHVLYGPSLRSRIIQRLQKSK) are cytoplasmic. The helical transmembrane segment at 110–130 (TALWAFGLTDEVFAAATAKLV) threads the bilayer. Residues 131–140 (RNNRRWSENW) lie on the Periplasmic side of the membrane. Residues 141 to 161 (MIGIAFSSWSSWVFGTVIGAF) form a helical membrane-spanning segment. At 162–172 (SGSGLLQGYPA) the chain is on the cytoplasmic side. A helical transmembrane segment spans residues 173-193 (VEAALGFMLPALFMSFLLASF). The Periplasmic segment spans residues 194–205 (QRKQSLCVTAAL). A helical membrane pass occupies residues 206–226 (VGALAGVTLFSIPVAILAGIV). The Cytoplasmic portion of the chain corresponds to 227-245 (CGCLTALIQAFWQGAPDEL).

The protein belongs to the AzlC family.

Its subcellular location is the cell inner membrane. This Escherichia coli (strain K12) protein is Inner membrane protein YgaZ (ygaZ).